We begin with the raw amino-acid sequence, 480 residues long: Aspartyl/glutamyl-tRNA(Asn/Gln) amidotransferase subunit B (480 aa).

The protein belongs to the GatB/GatE family. GatB subfamily. Heterotrimer of A, B and C subunits.

It catalyses the reaction L-glutamyl-tRNA(Gln) + L-glutamine + ATP + H2O = L-glutaminyl-tRNA(Gln) + L-glutamate + ADP + phosphate + H(+). It carries out the reaction L-aspartyl-tRNA(Asn) + L-glutamine + ATP + H2O = L-asparaginyl-tRNA(Asn) + L-glutamate + ADP + phosphate + 2 H(+). Functionally, allows the formation of correctly charged Asn-tRNA(Asn) or Gln-tRNA(Gln) through the transamidation of misacylated Asp-tRNA(Asn) or Glu-tRNA(Gln) in organisms which lack either or both of asparaginyl-tRNA or glutaminyl-tRNA synthetases. The reaction takes place in the presence of glutamine and ATP through an activated phospho-Asp-tRNA(Asn) or phospho-Glu-tRNA(Gln). The polypeptide is Aspartyl/glutamyl-tRNA(Asn/Gln) amidotransferase subunit B (Streptococcus pneumoniae serotype 4 (strain ATCC BAA-334 / TIGR4)).